Reading from the N-terminus, the 142-residue chain is Large ribosomal subunit protein uL13 (142 aa).

Belongs to the universal ribosomal protein uL13 family. Part of the 50S ribosomal subunit.

Its function is as follows. This protein is one of the early assembly proteins of the 50S ribosomal subunit, although it is not seen to bind rRNA by itself. It is important during the early stages of 50S assembly. The protein is Large ribosomal subunit protein uL13 of Cellvibrio japonicus (strain Ueda107) (Pseudomonas fluorescens subsp. cellulosa).